We begin with the raw amino-acid sequence, 113 residues long: Large ribosomal subunit protein uL22 (113 aa).

This sequence belongs to the universal ribosomal protein uL22 family. In terms of assembly, part of the 50S ribosomal subunit.

This protein binds specifically to 23S rRNA; its binding is stimulated by other ribosomal proteins, e.g. L4, L17, and L20. It is important during the early stages of 50S assembly. It makes multiple contacts with different domains of the 23S rRNA in the assembled 50S subunit and ribosome. In terms of biological role, the globular domain of the protein is located near the polypeptide exit tunnel on the outside of the subunit, while an extended beta-hairpin is found that lines the wall of the exit tunnel in the center of the 70S ribosome. The sequence is that of Large ribosomal subunit protein uL22 from Bacillus subtilis (strain 168).